We begin with the raw amino-acid sequence, 300 residues long: Probable phytol kinase, chloroplastic (300 aa).

The N-terminal 36 residues, 1–36, are a transit peptide targeting the chloroplast; that stretch reads MAAARPALPSSPTSLLLARSTSAPDLAARRPRRWLV. A run of 7 helical transmembrane segments spans residues 60 to 78, 98 to 118, 122 to 142, 168 to 188, 227 to 247, 254 to 274, and 276 to 296; these read LLRDGGATLLVTAGAYSLV, VVHVLSGVFFMASWPLFSNST, FFAAVVPFLNCVRLLTYGLGF, YVIVLLIIVLVFWRDSPIGIV, FISGFLLSALMLSYFSWLGYI, ALGKLVLVALAATVVECIPVT, and VVDDNISVPLATMLVAFLLFG.

Belongs to the polyprenol kinase family.

The protein resides in the plastid. It is found in the chloroplast membrane. The enzyme catalyses phytol + CTP = phytyl phosphate + CDP + H(+). The protein operates within cofactor biosynthesis; tocopherol biosynthesis. Its function is as follows. Involved in the activation and reutilization of phytol from chlorophyll degradation in plant metabolism, including tocopherol biosynthesis. Catalyzes the conversion of phytol to phytol monophosphate (PMP). This chain is Probable phytol kinase, chloroplastic, found in Triticum aestivum (Wheat).